Consider the following 550-residue polypeptide: Amino acid transporter AVT1C (550 aa).

Residues 1–11 (MNHVPSDQSFY) are compositionally biased toward polar residues. Disordered regions lie at residues 1-44 (MNHV…ENQA) and 128-148 (QGLL…EKSS). Residues 20-34 (RKDYVEEDGGSHSDS) are compositionally biased toward basic and acidic residues. The next 11 helical transmembrane spans lie at 165-185 (AVLN…PYAA), 190-210 (WLGL…GILL), 237-257 (IFVS…YIIL), 283-303 (LFAL…DLSV), 307-327 (ISAG…WIGL), 342-362 (LSTL…HAVF), 377-397 (AVLL…AVMG), 422-442 (IAVW…ISPV), 462-484 (IGIR…FFGL), 488-510 (LIGS…LSIV), and 521-541 (LCVL…YSAL).

The protein belongs to the amino acid/polyamine transporter 2 family. Amino acid/auxin permease (AAAP) (TC 2.A.18.5) subfamily.

It is found in the membrane. This is Amino acid transporter AVT1C from Arabidopsis thaliana (Mouse-ear cress).